The following is a 564-amino-acid chain: MQITNKIHFRNLQGDLFGGVTAAVIALPMALAFGIASGAGATAGLWGAVIVGFFAALFGGTPTLISEPTGPMTVVQTAVIASLVAADPDNGLAMAFTVVMMAGLFQIAFGLLKLGKYVTMMPYTVISGFMSGIGIILVILQLAPFLGQASPKGGVIGTLQALPNLVSNVRPVETLLALMTVGIIWFMPSRWKKFAPPQLVALVLGTIISITLFGDLDIRRIGEIQAGLPALQLPVFQADQLQRMLIDAAVLGMLGCIDALLTSVVADSLTRTEHNSNKELVGQGIGNVMSGLFGGLGGAGATMGTVVNIQSGGRTALSGLIRAMVLLVVILGAAKLAATIPLAVLAGIAFKVGVDIIDWGFLKRAHHVSIKGALIMYAVIVLTVLVDLIAAVGIGVFIANILTIDRMSALQSKAVKSISDADDEILLSANEKRWLDEGNGRVLLFQLSGPMIFGVAKAIAREHNAIQECAAIVFDLSDVPHLGVTASLALENAIEEAAEKGRAVYIVGATGQTKRRLEKLQVFRFVPESNCYDDRSEALKDAVLALGPHESEDSPSSSSVQTTY.

The Cytoplasmic segment spans residues 1–11 (MQITNKIHFRN). A helical membrane pass occupies residues 12-37 (LQGDLFGGVTAAVIALPMALAFGIAS). Residues 38–40 (GAG) are Periplasmic-facing. Residues 41–58 (ATAGLWGAVIVGFFAALF) traverse the membrane as a helical segment. The Cytoplasmic segment spans residues 59–70 (GGTPTLISEPTG). Thr-69 is a binding site for hydrogencarbonate. The chain crosses the membrane as a helical span at residues 71–86 (PMTVVQTAVIASLVAA). The Periplasmic portion of the chain corresponds to 87-90 (DPDN). A helical transmembrane segment spans residues 91 to 112 (GLAMAFTVVMMAGLFQIAFGLL). Topologically, residues 113–122 (KLGKYVTMMP) are cytoplasmic. Residues 123–145 (YTVISGFMSGIGIILVILQLAPF) form a helical membrane-spanning segment. At 146–170 (LGQASPKGGVIGTLQALPNLVSNVR) the chain is on the periplasmic side. The helical transmembrane segment at 171–185 (PVETLLALMTVGIIW) threads the bilayer. Residues 186–196 (FMPSRWKKFAP) lie on the Cytoplasmic side of the membrane. A helical transmembrane segment spans residues 197–211 (PQLVALVLGTIISIT). Topologically, residues 212–240 (LFGDLDIRRIGEIQAGLPALQLPVFQADQ) are periplasmic. The helical transmembrane segment at 241-269 (LQRMLIDAAVLGMLGCIDALLTSVVADSL) threads the bilayer. Residues Asp-258 and Thr-262 each coordinate Na(+). Topologically, residues 270-275 (TRTEHN) are cytoplasmic. Residues 276 to 292 (SNKELVGQGIGNVMSGL) form a helical membrane-spanning segment. The Periplasmic segment spans residues 293–302 (FGGLGGAGAT). Na(+) is bound at residue Gly-300. Hydrogencarbonate is bound at residue Ala-301. Residue Thr-302 participates in Na(+) binding. Residues 303-312 (MGTVVNIQSG) traverse the membrane as a helical segment. Residues 313–315 (GRT) lie on the Cytoplasmic side of the membrane. A helical membrane pass occupies residues 316–338 (ALSGLIRAMVLLVVILGAAKLAA). Over 339 to 341 (TIP) the chain is Periplasmic. The chain crosses the membrane as a helical span at residues 342–357 (LAVLAGIAFKVGVDII). Topologically, residues 358-369 (DWGFLKRAHHVS) are cytoplasmic. The chain crosses the membrane as a helical span at residues 370-390 (IKGALIMYAVIVLTVLVDLIA). Topologically, residues 391 to 392 (AV) are periplasmic. A helical transmembrane segment spans residues 393–405 (GIGVFIANILTID). Residues 406–564 (RMSALQSKAV…PSSSSVQTTY (159 aa)) lie on the Cytoplasmic side of the membrane. The STAS domain maps to 432-542 (KRWLDEGNGR…DDRSEALKDA (111 aa)).

This sequence belongs to the SLC26A/SulP transporter (TC 2.A.53) family. Forms homodimers through the STAS cytoplasmic domain.

It is found in the cell inner membrane. Functionally, low affinity, high-flux Na(+)-dependent bicarbonate transporter. Involved in carbone dioxide-concentrating mechanisms (CCMs) that accumulate CO(2) and improve photosynthetic carbon fixation. The sequence is that of Bicarbonate transporter BicA from Synechocystis sp. (strain ATCC 27184 / PCC 6803 / Kazusa).